The primary structure comprises 621 residues: Exonuclease 3'-5' domain-containing protein 2 (621 aa).

The Mitochondrial intermembrane portion of the chain corresponds to 1-4 (MSRQ). The helical transmembrane segment at 5 to 25 (NLVALTVTTLLGVAVGGFVLW) threads the bilayer. Residues 26–621 (KGIQRRRRSK…FGEDLPIQLS (596 aa)) lie on the Cytoplasmic side of the membrane. Positions 34–68 (SKTSPVTQQPQQKVLGSRELPPPEDDQLHSSAPRS) are disordered. The segment covering 36–47 (TSPVTQQPQQKV) has biased composition (polar residues). The a divalent metal cation site is built by aspartate 108, glutamate 110, and aspartate 246. A 3'-5' exonuclease domain is found at 155–247 (ILADGTILKV…DQVIYAARDA (93 aa)). The segment at 299 to 343 (RLGEEVNGEATESQQKPRNKKSKMDGMVPGNHQGRDPRKHKRKPL) is disordered.

The protein belongs to the EXD2 family. Homodimer. Interacts with RBBP8, MRE11 and BRCA1. Mg(2+) is required as a cofactor. Mn(2+) serves as cofactor.

The protein localises to the mitochondrion outer membrane. It localises to the mitochondrion matrix. The protein resides in the nucleus. Its subcellular location is the chromosome. The enzyme catalyses Exonucleolytic cleavage in the 3'- to 5'-direction to yield nucleoside 5'-phosphates.. Its function is as follows. Exonuclease that has both 3'-5' exoribonuclease and exodeoxyribonuclease activities, depending on the divalent metal cation used as cofactor. In presence of Mg(2+), only shows 3'-5' exoribonuclease activity, while it shows both exoribonuclease and exodeoxyribonuclease activities in presence of Mn(2+). Acts as an exoribonuclease in mitochondrion, possibly by regulating ATP production and mitochondrial translation. Also involved in the response to DNA damage. Acts as 3'-5' exodeoxyribonuclease for double-strand breaks resection and efficient homologous recombination. Plays a key role in controlling the initial steps of chromosomal break repair, it is recruited to chromatin in a damage-dependent manner and functionally interacts with the MRN complex to accelerate resection through its 3'-5' exonuclease activity, which efficiently processes double-stranded DNA substrates containing nicks. Also involved in response to replicative stress: recruited to stalled forks and is required to stabilize and restart stalled replication forks by restraining excessive fork regression, thereby suppressing their degradation. This chain is Exonuclease 3'-5' domain-containing protein 2, found in Homo sapiens (Human).